We begin with the raw amino-acid sequence, 480 residues long: Adenylosuccinate synthetase, chloroplastic (480 aa).

The N-terminal 54 residues, 1–54 (MATARVMVADRARAFGGTTATRARRDDQGRRVTIARGIPSRARVVVARASERAY), are a transit peptide targeting the chloroplast. Residues 69 to 75 (GDEGKGK) and 97 to 99 (GHT) each bind GTP. The Proton acceptor role is filled by aspartate 70. Mg(2+)-binding residues include aspartate 70 and glycine 97. IMP is bound by residues 70 to 73 (DEGK), 95 to 98 (NAGH), threonine 187, arginine 201, asparagine 278, threonine 293, and arginine 357. The Proton donor role is filled by histidine 98. 353–359 (TTTGRPR) is a substrate binding site. Residues arginine 359, 385–387 (KLD), and 468–470 (GVG) contribute to the GTP site.

This sequence belongs to the adenylosuccinate synthetase family. In terms of assembly, homodimer. It depends on Mg(2+) as a cofactor.

It localises to the plastid. The protein resides in the chloroplast. The catalysed reaction is IMP + L-aspartate + GTP = N(6)-(1,2-dicarboxyethyl)-AMP + GDP + phosphate + 2 H(+). It functions in the pathway purine metabolism; AMP biosynthesis via de novo pathway; AMP from IMP: step 1/2. Functionally, plays an important role in the de novo pathway and in the salvage pathway of purine nucleotide biosynthesis. Catalyzes the first committed step in the biosynthesis of AMP from IMP. This chain is Adenylosuccinate synthetase, chloroplastic, found in Ostreococcus tauri.